Reading from the N-terminus, the 436-residue chain is Transcriptional regulator dmxR14 (436 aa).

A compositionally biased stretch (polar residues) spans 1 to 27 (MEEAETNTQVDSVPSNSVRSGAELSSK). The interval 1-32 (MEEAETNTQVDSVPSNSVRSGAELSSKSKLRD) is disordered. The zn(2)-C6 fungal-type DNA-binding region spans 34–61 (CHACARSKVRCPKQKPSCSRCEARGTTC). The disordered stretch occupies residues 67-136 (RRPGRRRETS…ITTVHNGPEN (70 aa)). The span at 90–136 (SHANNRNSPSFSSTRSTLPSPIASDSNSNFTQPQNSSITTVHNGPEN) shows a compositional bias: polar residues.

Its subcellular location is the nucleus. Its function is as follows. Transcriptional regulator; part of the gene cluster that mediates the biosynthesis of the dimeric xanthones cryptosporioptides. This Cryptosporiopsis sp. (strain 8999) protein is Transcriptional regulator dmxR14.